Reading from the N-terminus, the 885-residue chain is Alanine--tRNA ligase (885 aa).

Positions 564, 568, 676, and 680 each coordinate Zn(2+).

It belongs to the class-II aminoacyl-tRNA synthetase family. Zn(2+) is required as a cofactor.

It localises to the cytoplasm. The catalysed reaction is tRNA(Ala) + L-alanine + ATP = L-alanyl-tRNA(Ala) + AMP + diphosphate. Its function is as follows. Catalyzes the attachment of alanine to tRNA(Ala) in a two-step reaction: alanine is first activated by ATP to form Ala-AMP and then transferred to the acceptor end of tRNA(Ala). Also edits incorrectly charged Ser-tRNA(Ala) and Gly-tRNA(Ala) via its editing domain. The protein is Alanine--tRNA ligase of Brucella ovis (strain ATCC 25840 / 63/290 / NCTC 10512).